A 94-amino-acid polypeptide reads, in one-letter code: MIKSELIARLANENPHLTQKDVERVVGVILERMIGALEDGGRVELRGFGALSVRSRPARAGRNPRTGETVDVRAKHVPFFKSGKELRGRLNADE.

This sequence belongs to the bacterial histone-like protein family. In terms of assembly, heterodimer of an alpha and a beta chain.

In terms of biological role, this protein is one of the two subunits of integration host factor, a specific DNA-binding protein that functions in genetic recombination as well as in transcriptional and translational control. The protein is Integration host factor subunit beta of Caulobacter sp. (strain K31).